A 305-amino-acid polypeptide reads, in one-letter code: tRNA pseudouridine synthase B (305 aa).

Asp50 functions as the Nucleophile in the catalytic mechanism.

The protein belongs to the pseudouridine synthase TruB family. Type 1 subfamily.

The enzyme catalyses uridine(55) in tRNA = pseudouridine(55) in tRNA. Functionally, responsible for synthesis of pseudouridine from uracil-55 in the psi GC loop of transfer RNAs. The protein is tRNA pseudouridine synthase B of Rhodococcus jostii (strain RHA1).